The following is a 479-amino-acid chain: MMDVNSSGRPDLYGHLRSFLLPEVGRGLPDLSPDGGADPVAGSWAPHLLSEVTASPAPTWDAPPDNASGCGEQINYGRVEKVVIGSILTLITLLTIAGNCLVVISVCFVKKLRQPSNYLIVSLALADLSVAVAVMPFVSVTDLIGGKWIFGHFFCNVFIAMDVMCCTASIMTLCVISIDRYLGITRPLTYPVRQNGKCMAKMILSVWLLSASITLPPLFGWAQNVNDDKVCLISQDFGYTIYSTAVAFYIPMSVMLFMYYQIYKAARKSAAKHKFPGFPRVEPDSVIALNGIVKLQKEVEECANLSRLLKHERKNISIFKREQKAATTLGIIVGAFTVCWLPFFLLSTARPFICGTSCSCIPLWVERTFLWLGYANSLINPFIYAFFNRDLRTTYRSLLQCQYRNINRKLSAAGMHEALKLAERPERPEFVLRACTRRVLLRPEKRPPVSVWVLQSPDHHNWLADKMLTTVEKKVMIHD.

Topologically, residues 1–83 are extracellular; it reads MMDVNSSGRP…INYGRVEKVV (83 aa). Residues N5 and N66 are each glycosylated (N-linked (GlcNAc...) asparagine). The helical transmembrane segment at 84-108 threads the bilayer; it reads IGSILTLITLLTIAGNCLVVISVCF. Residues 109–118 are Cytoplasmic-facing; the sequence is VKKLRQPSNY. The chain crosses the membrane as a helical span at residues 119-140; it reads LIVSLALADLSVAVAVMPFVSV. Topologically, residues 141–152 are extracellular; it reads TDLIGGKWIFGH. A helical membrane pass occupies residues 153 to 178; the sequence is FFCNVFIAMDVMCCTASIMTLCVISI. A disulfide bond links C155 and C231. D162 is a binding site for serotonin. Topologically, residues 179–198 are cytoplasmic; that stretch reads DRYLGITRPLTYPVRQNGKC. The helical transmembrane segment at 199 to 219 threads the bilayer; it reads MAKMILSVWLLSASITLPPLF. At 220–237 the chain is on the extracellular side; the sequence is GWAQNVNDDKVCLISQDF. A helical membrane pass occupies residues 238–260; sequence GYTIYSTAVAFYIPMSVMLFMYY. At 261 to 326 the chain is on the cytoplasmic side; sequence QIYKAARKSA…SIFKREQKAA (66 aa). A helical transmembrane segment spans residues 327–352; the sequence is TTLGIIVGAFTVCWLPFFLLSTARPF. At 353–363 the chain is on the extracellular side; the sequence is ICGTSCSCIPL. A helical membrane pass occupies residues 364 to 387; the sequence is WVERTFLWLGYANSLINPFIYAFF. The Cytoplasmic segment spans residues 388 to 479; that stretch reads NRDLRTTYRS…TVEKKVMIHD (92 aa). C401 carries S-palmitoyl cysteine lipidation.

This sequence belongs to the G-protein coupled receptor 1 family. Predominant isoform in spleen, caudate and hippocampus. As to expression, expressed at lower levels. In terms of tissue distribution, minor isoform in terms of expression.

It is found in the cell membrane. Its function is as follows. G-protein coupled receptor for 5-hydroxytryptamine (serotonin), a biogenic hormone that functions as a neurotransmitter, a hormone and a mitogen. Ligand binding causes a conformation change that triggers signaling via guanine nucleotide-binding proteins (G proteins) and modulates the activity of downstream effectors. HTR7 is coupled to G(s) G alpha proteins and mediates activation of adenylate cyclase activity. This chain is 5-hydroxytryptamine receptor 7, found in Homo sapiens (Human).